Consider the following 388-residue polypeptide: S-adenosylmethionine synthase (388 aa).

Position 16 (His-16) interacts with ATP. Asp-18 contacts Mg(2+). Glu-44 serves as a coordination point for K(+). 2 residues coordinate L-methionine: Glu-57 and Gln-100. Positions 100 to 110 (QSPEIAQGVDR) are flexible loop. Residues 165–167 (DAK), Asp-240, 246–247 (RK), Ala-263, and Lys-267 contribute to the ATP site. Position 240 (Asp-240) interacts with L-methionine. Position 271 (Lys-271) interacts with L-methionine.

It belongs to the AdoMet synthase family. As to quaternary structure, homotetramer; dimer of dimers. It depends on Mg(2+) as a cofactor. Requires K(+) as cofactor.

The protein resides in the cytoplasm. It catalyses the reaction L-methionine + ATP + H2O = S-adenosyl-L-methionine + phosphate + diphosphate. Its pathway is amino-acid biosynthesis; S-adenosyl-L-methionine biosynthesis; S-adenosyl-L-methionine from L-methionine: step 1/1. Catalyzes the formation of S-adenosylmethionine (AdoMet) from methionine and ATP. The overall synthetic reaction is composed of two sequential steps, AdoMet formation and the subsequent tripolyphosphate hydrolysis which occurs prior to release of AdoMet from the enzyme. The polypeptide is S-adenosylmethionine synthase (Acinetobacter baumannii (strain AYE)).